We begin with the raw amino-acid sequence, 196 residues long: 3-isopropylmalate dehydratase small subunit (196 aa).

This sequence belongs to the LeuD family. LeuD type 1 subfamily. As to quaternary structure, heterodimer of LeuC and LeuD.

The catalysed reaction is (2R,3S)-3-isopropylmalate = (2S)-2-isopropylmalate. It functions in the pathway amino-acid biosynthesis; L-leucine biosynthesis; L-leucine from 3-methyl-2-oxobutanoate: step 2/4. Its function is as follows. Catalyzes the isomerization between 2-isopropylmalate and 3-isopropylmalate, via the formation of 2-isopropylmaleate. The chain is 3-isopropylmalate dehydratase small subunit from Rhodopirellula baltica (strain DSM 10527 / NCIMB 13988 / SH1).